The primary structure comprises 365 residues: 1-aminocyclopropane-1-carboxylate oxidase homolog 9 (365 aa).

The 100-residue stretch at 214-313 (KGLLMLCHYY…RISVACFVSS (100 aa)) folds into the Fe2OG dioxygenase domain. Residues histidine 238, aspartate 240, and histidine 294 each contribute to the Fe cation site. A 2-oxoglutarate-binding site is contributed by arginine 304.

It belongs to the iron/ascorbate-dependent oxidoreductase family. Fe(2+) is required as a cofactor.

The chain is 1-aminocyclopropane-1-carboxylate oxidase homolog 9 from Arabidopsis thaliana (Mouse-ear cress).